The following is a 151-amino-acid chain: Endoribonuclease YbeY (151 aa).

His117, His121, and His127 together coordinate Zn(2+).

It belongs to the endoribonuclease YbeY family. It depends on Zn(2+) as a cofactor.

It is found in the cytoplasm. In terms of biological role, single strand-specific metallo-endoribonuclease involved in late-stage 70S ribosome quality control and in maturation of the 3' terminus of the 16S rRNA. The protein is Endoribonuclease YbeY of Alkaliphilus oremlandii (strain OhILAs) (Clostridium oremlandii (strain OhILAs)).